The primary structure comprises 296 residues: Urease accessory protein UreD (296 aa).

Belongs to the UreD family. As to quaternary structure, ureD, UreF and UreG form a complex that acts as a GTP-hydrolysis-dependent molecular chaperone, activating the urease apoprotein by helping to assemble the nickel containing metallocenter of UreC. The UreE protein probably delivers the nickel.

It localises to the cytoplasm. Its function is as follows. Required for maturation of urease via the functional incorporation of the urease nickel metallocenter. This Synechococcus sp. (strain CC9311) protein is Urease accessory protein UreD.